Consider the following 74-residue polypeptide: Peptide ToAP4 (74 aa).

A signal peptide spans 1–22 (MQIKHLITLFFLVLIVADQCSA). Lys39 bears the Lysine amide mark. The propeptide occupies 40 to 74 (GGRRKREIAAQIEQYRDLQKREAELEELLDRLPMF).

The protein belongs to the non-disulfide-bridged peptide (NDBP) superfamily. Short antimicrobial peptide (group 4) family. In terms of tissue distribution, expressed by the venom gland.

It localises to the secreted. Its function is as follows. Shows anti-inflammatory activities, since it decreases release of pro-inflammatory cytokines, and increases release of anti-inflammatory cytokines. Acts by blocking the Toll-like receptor 4 (TLR4). Also increases MHC-II expression in LPS-stimulated cells. Does not show antibacterial activity on Mycobacterium abscessus subsp. massiliense. Does not show antifungal activity. Has low hemolytic activity on human erythrocyte and low monocyte cytotoxicity. In vivo, does not induce immune cell migration. Helical wheel projections predict an amphipathic peptide with distinct hydrophobic and hydrophilic faces. The sequence is that of Peptide ToAP4 from Tityus obscurus (Amazonian scorpion).